An 88-amino-acid polypeptide reads, in one-letter code: UPF0495 protein DEHA2C16280g (88 aa).

The helical transmembrane segment at 25–47 (YPLFAAMGVAVASGCFFTYRHFA) threads the bilayer.

The protein belongs to the UPF0495 family.

The protein localises to the membrane. The chain is UPF0495 protein DEHA2C16280g from Debaryomyces hansenii (strain ATCC 36239 / CBS 767 / BCRC 21394 / JCM 1990 / NBRC 0083 / IGC 2968) (Yeast).